The primary structure comprises 334 residues: Malate dehydrogenase, cytoplasmic (334 aa).

At Ser2 the chain carries N-acetylserine. NAD(+)-binding positions include 11 to 17 and Asp42; that span reads GAAGQIA. The substrate site is built by Arg92 and Arg98. Asn105 serves as a coordination point for NAD(+). At Lys110 the chain carries N6-succinyllysine. Residue Gln112 coordinates NAD(+). Lys118 and Lys121 each carry N6-acetyllysine. 129–131 serves as a coordination point for NAD(+); it reads VGN. Substrate contacts are provided by Asn131 and Arg162. Residue His187 is the Proton acceptor of the active site. Lys214 carries the post-translational modification N6-succinyllysine. A Phosphoserine modification is found at Ser217. Arg230 bears the Omega-N-methylarginine mark. A Phosphoserine modification is found at Ser241. N6-acetyllysine; alternate is present on Lys298. The residue at position 298 (Lys298) is an N6-succinyllysine; alternate. Phosphoserine is present on Ser309. Position 318 is an N6-succinyllysine (Lys318). A phosphoserine mark is found at Ser332 and Ser333.

This sequence belongs to the LDH/MDH superfamily. MDH type 2 family. Homodimer. ISGylated. Post-translationally, acetylation at Lys-118 dramatically enhances enzymatic activity and promotes adipogenic differentiation.

It localises to the cytoplasm. The protein resides in the cytosol. The catalysed reaction is (S)-malate + NAD(+) = oxaloacetate + NADH + H(+). It catalyses the reaction (2R)-2-hydroxy-3-(4-hydroxyphenyl)propanoate + NAD(+) = 3-(4-hydroxyphenyl)pyruvate + NADH + H(+). It carries out the reaction (S)-2-hydroxyglutarate + NAD(+) = 2-oxoglutarate + NADH + H(+). In terms of biological role, catalyzes the reduction of aromatic alpha-keto acids in the presence of NADH. Plays essential roles in the malate-aspartate shuttle and the tricarboxylic acid cycle, important in mitochondrial NADH supply for oxidative phosphorylation. Catalyzes the reduction of 2-oxoglutarate to 2-hydroxyglutarate, leading to elevated reactive oxygen species (ROS). This chain is Malate dehydrogenase, cytoplasmic (MDH1), found in Felis catus (Cat).